The sequence spans 88 residues: Putative septation protein SpoVG (88 aa).

The protein belongs to the SpoVG family.

In terms of biological role, could be involved in septation. The chain is Putative septation protein SpoVG from Caldicellulosiruptor saccharolyticus (strain ATCC 43494 / DSM 8903 / Tp8T 6331).